A 345-amino-acid polypeptide reads, in one-letter code: Dihydroorotase (345 aa).

Positions 14 and 16 each coordinate Zn(2+). Substrate contacts are provided by residues 16 to 18 and Asn-42; that span reads HLR. Residues Lys-100, His-137, and His-175 each contribute to the Zn(2+) site. An N6-carboxylysine modification is found at Lys-100. His-137 lines the substrate pocket. Leu-220 provides a ligand contact to substrate. Asp-248 is a Zn(2+) binding site. The active site involves Asp-248. The substrate site is built by His-252 and Ala-264.

It belongs to the metallo-dependent hydrolases superfamily. DHOase family. Class II DHOase subfamily. As to quaternary structure, homodimer. Zn(2+) is required as a cofactor.

The enzyme catalyses (S)-dihydroorotate + H2O = N-carbamoyl-L-aspartate + H(+). It participates in pyrimidine metabolism; UMP biosynthesis via de novo pathway; (S)-dihydroorotate from bicarbonate: step 3/3. Functionally, catalyzes the reversible cyclization of carbamoyl aspartate to dihydroorotate. The sequence is that of Dihydroorotase from Methylobacillus flagellatus (strain ATCC 51484 / DSM 6875 / VKM B-1610 / KT).